Reading from the N-terminus, the 246-residue chain is Deoxycytidylate 5-hydroxymethyltransferase (246 aa).

The active site involves Cys148.

This sequence belongs to the thymidylate synthase family.

The enzyme catalyses dCMP + (6R)-5,10-methylene-5,6,7,8-tetrahydrofolate + H2O = 5-hydroxymethyl-dCMP + (6S)-5,6,7,8-tetrahydrofolate. The chain is Deoxycytidylate 5-hydroxymethyltransferase (42) from Enterobacteria phage T6 (Bacteriophage T6).